The chain runs to 708 residues: Retrotransposon-derived protein PEG10 (708 aa).

Residues 1 to 50 (MTERRRDELSEEINNLREKVMKQSEENNNLQSQVQKLTEENTTLREQVEP) are a coiled coil. The segment at 21–74 (MKQSEENNNLQSQVQKLTEENTTLREQVEPTPEDEDDDIELRGAAAAAAPPPPI) is disordered. The span at 26–36 (ENNNLQSQVQK) shows a compositional bias: polar residues. Residues 37–48 (LTEENTTLREQV) show a composition bias toward basic and acidic residues. A necessary for interaction with ACVRL1 region spans residues 76-275 (EECPEDLPEK…HQVDPTEPVG (200 aa)). The CCHC-type zinc-finger motif lies at 293-310 (NLCLYCGTGGHYADNCPA). Residues 310–344 (AKASKSSPAGKLPGPAVEGPSATGPEIIRSPQDDA) form a disordered region. Residues Lys-311 and Lys-314 each participate in a glycyl lysine isopeptide (Lys-Gly) (interchain with G-Cter in ubiquitin) cross-link. Phosphoserine is present on residues Ser-316 and Leu-321. 3 positions are modified to omega-N-methylarginine: Arg-507, Arg-598, and Arg-611. A disordered region spans residues 683-708 (PVPQYPPPQPPPPPPPPPPPPSYSTL).

In terms of assembly, homooligomer; homooligomerizes into virion-like capsids. Interacts with ACVRL1. Interacts with SIAH1 and SIAH2. Post-translationally, undergoes proteolytic cleavage. In terms of tissue distribution, expressed in the cytotrophoblast layer but not in the overlying syncytiotrophoblast of the placenta. Expressed in prostate and breast carcinomas but not in normal breast and prostate epithelial cells. Expressed in the Hep-G2 cell line (at protein level). Expressed in brain, liver, spleen, kidney, thymus, lung, ovary, testis, reactive lymph node, skeletal muscle, adipose tissue and placenta. Expressed in pancreatic and hepatocellular carcinomas (HCC).

It is found in the extracellular vesicle membrane. It localises to the cytoplasm. The protein localises to the nucleus. Its function is as follows. Retrotransposon-derived protein that binds its own mRNA and self-assembles into virion-like capsids. Forms virion-like extracellular vesicles that encapsulate their own mRNA and are released from cells, enabling intercellular transfer of PEG10 mRNA. Binds its own mRNA in the 5'-UTR region, in the region near the boundary between the nucleocapsid (NC) and protease (PRO) coding sequences and in the beginning of the 3'-UTR region. Involved in placenta formation: required for trophoblast stem cells differentiation. Involved at the immediate early stage of adipocyte differentiation. Overexpressed in many cancers and enhances tumor progression: promotes cell proliferation by driving cell cycle progression from G0/G1. Enhances cancer progression by inhibiting the TGF-beta signaling, possibly via interaction with the TGF-beta receptor ACVRL1. May bind to the 5'-GCCTGTCTTT-3' DNA sequence of the MB1 domain in the myelin basic protein (MBP) promoter; additional evidences are however required to confirm this result. The chain is Retrotransposon-derived protein PEG10 from Homo sapiens (Human).